A 337-amino-acid chain; its full sequence is Monoacylglycerol lipase abhd6-B (337 aa).

At 1–19 (MDIDVLNMFLVAGGTLLVP) the chain is on the extracellular side. Residues 20 to 42 (LLAFMTSFLLWPAALIRIYYWYW) traverse the membrane as a helical; Signal-anchor for type II membrane protein segment. The Cytoplasmic portion of the chain corresponds to 43-337 (RRALGMQVKY…QSTDNHKKHD (295 aa)). Residues 72–313 (PSVLMLHGFS…CGHSVVMERP (242 aa)) enclose the AB hydrolase-1 domain. The active-site Nucleophile is S148. Catalysis depends on charge relay system residues D278 and H306.

Belongs to the AB hydrolase superfamily.

Its subcellular location is the late endosome membrane. The protein localises to the lysosome membrane. The protein resides in the mitochondrion membrane. It carries out the reaction Hydrolyzes glycerol monoesters of long-chain fatty acids.. The catalysed reaction is 1-octanoylglycerol + H2O = octanoate + glycerol + H(+). The enzyme catalyses 1-decanoylglycerol + H2O = decanoate + glycerol + H(+). It catalyses the reaction 1-dodecanoylglycerol + H2O = dodecanoate + glycerol + H(+). It carries out the reaction 1-tetradecanoylglycerol + H2O = tetradecanoate + glycerol + H(+). The catalysed reaction is 2-hexadecanoylglycerol + H2O = glycerol + hexadecanoate + H(+). The enzyme catalyses 2-(9Z-octadecenoyl)-glycerol + H2O = glycerol + (9Z)-octadecenoate + H(+). It catalyses the reaction 1-(9Z-octadecenoyl)-glycerol + H2O = glycerol + (9Z)-octadecenoate + H(+). It carries out the reaction 2-(9Z,12Z-octadecadienoyl)-glycerol + H2O = (9Z,12Z)-octadecadienoate + glycerol + H(+). The catalysed reaction is 2-(5Z,8Z,11Z,14Z-eicosatetraenoyl)-glycerol + H2O = glycerol + (5Z,8Z,11Z,14Z)-eicosatetraenoate + H(+). The enzyme catalyses 1-(5Z,8Z,11Z,14Z-eicosatetraenoyl)-glycerol + H2O = glycerol + (5Z,8Z,11Z,14Z)-eicosatetraenoate + H(+). It catalyses the reaction 1-(9Z,12Z-octadecadienoyl)-glycerol + H2O = (9Z,12Z)-octadecadienoate + glycerol + H(+). It carries out the reaction 3-(9Z-octadecenoyl)-sn-glycero-1-phospho-(3'-(9Z-octadecenoyl)-1'-sn-glycerol) + H2O = 3-(9Z-octadecenoyl)-sn-glycero-1-phospho-(1'-sn-glycerol) + (9Z)-octadecenoate + H(+). The catalysed reaction is (S,S)-2-(9Z-octadecenoyl)-sn-glycero-1-phospho-(2'-(9Z-octadecenoyl)-1'-sn-glycerol) + H2O = (S,S)-2-(9Z-octadecenoyl)-sn-glycero-1-phospho-(1'-sn-glycerol) + (9Z)-octadecenoate + H(+). The enzyme catalyses (R,R)-2-(9Z-octadecenoyl)-sn-glycero-3-phospho-(2'-(9Z-octadecenoyl)-3'-sn-glycerol) + H2O = (R,R)-2-(9Z-octadecenoyl)-sn-glycero-3-phospho-(3'-sn-glycerol) + (9Z)-octadecenoate + H(+). Lipase that preferentially hydrolysis medium-chain saturated monoacylglycerols including 2-arachidonoylglycerol. Through 2-arachidonoylglycerol degradation may regulate endocannabinoid signaling pathways. Also has a lysophosphatidyl lipase activity with a preference for lysophosphatidylglycerol among other lysophospholipids. Also able to degrade bis(monoacylglycero)phosphate (BMP) and constitutes the major enzyme for BMP catabolism. BMP, also known as lysobisphosphatidic acid, is enriched in late endosomes and lysosomes and plays a key role in the formation of intraluminal vesicles and in lipid sorting. This Xenopus laevis (African clawed frog) protein is Monoacylglycerol lipase abhd6-B (abhd6-b).